Consider the following 630-residue polypeptide: Mitochondrial Rho GTPase 1 (630 aa).

Residues 1-168 (MKEVRVVICG…FYMCRACVIY (168 aa)) enclose the Miro 1 domain. The Cytoplasmic segment spans residues 1 to 598 (MKEVRVVICG…EEDSNKTNYQ (598 aa)). GTP is bound by residues 10–17 (GDQGVGKS), 57–61 (DTQSD), and 113–116 (NKSE). 2 EF-hand domains span residues 184–219 (ATIH…CFSK) and 304–339 (KGYR…TPGL). Ca(2+)-binding residues include Asp197, Asn199, Asp201, Glu208, Asp317, Asp319, Asp321, and Glu328. The region spanning 419–579 (RNVFLCFVVG…FIQLAESAQY (161 aa)) is the Miro 2 domain. Residues 428–435 (GSKSCGKT), 459–463 (EFQST), and 527–530 (TKAD) contribute to the GTP site. Residues 599–619 (LVAALTAFGALLLSVGGSLTW) traverse the membrane as a helical; Anchor for type IV membrane protein segment. The Mitochondrial intermembrane segment spans residues 620-630 (KIIKHQYYSKK).

It belongs to the mitochondrial Rho GTPase family.

It localises to the mitochondrion outer membrane. Functionally, mitochondrial GTPase involved in mitochondrial trafficking. Probably involved in control of anterograde transport of mitochondria and their subcellular distribution. This is Mitochondrial Rho GTPase 1 (gem1) from Schizosaccharomyces pombe (strain 972 / ATCC 24843) (Fission yeast).